Reading from the N-terminus, the 494-residue chain is MLASGLLLVTLLACLTVMVLMSVWRQRKSRGKLPPGPTPLPFIGNYLQLNTEQMYNSLMKISERYGPVFTIHLGPRRVVVLCGHDAVKEALVDQAEEFSGRGEQATFDWLFKGYGVAFSNGERAKQLRRFSIATLRGFGVGKRGIEERIQEEAGFLIDALRGTHGANIDPTFFLSRTVSNVISSIVFGDRFDYEDKEFLSLLRMMLGSFQFTATSTGQLYEMFSSVMKHLPGPQQQAFKELQGLEDFIAKKVEHNQRTLDPNSPRDFIDSFLIRMQEEEKNPNTEFYLKNLVMTTLNLFFAGTETVSTTLRYGFLLLMKHPEVEAKVHEEIDRVIGKNRQPKFEDRAKMPYTEAVIHEIQRFGDMLPMGLAHRVNKDTKFRDFFLPKGTEVFPMLGSVLRDPRFFSNPRDFNPQHFLDKKGQFKKSDAFVPFSIGKRYCFGEGLARMELFLFFTTIMQNFRFKSPQSPKDIDVSPKHVGFATIPRNYTMSFLPR.

Residue Asn-297 coordinates substrate. Cys-439 contributes to the heme binding site.

It belongs to the cytochrome P450 family. Heme is required as a cofactor. As to expression, expressed in liver and a number of extrahepatic tissues, including nasal mucosa, lung, trachea, brain, mammary gland, prostate, testis, and uterus, but not in heart, kidney, bone marrow, colon, small intestine, spleen, stomach, thymus, or skeletal muscle.

The protein resides in the endoplasmic reticulum membrane. Its subcellular location is the microsome membrane. It carries out the reaction an organic molecule + reduced [NADPH--hemoprotein reductase] + O2 = an alcohol + oxidized [NADPH--hemoprotein reductase] + H2O + H(+). In terms of biological role, exhibits a coumarin 7-hydroxylase activity. Active in the metabolic activation of hexamethylphosphoramide, N,N-dimethylaniline, 2'-methoxyacetophenone, N-nitrosomethylphenylamine, and the tobacco-specific carcinogen, 4-(methylnitrosamino)-1-(3-pyridyl)-1-butanone. Possesses phenacetin O-deethylation activity. The protein is Cytochrome P450 2A13 (CYP2A13) of Homo sapiens (Human).